The chain runs to 234 residues: Small ribosomal subunit protein uS3 (234 aa).

One can recognise a KH type-2 domain in the interval 39–107 (IRKFLKKELY…EVSINIKEVK (69 aa)).

This sequence belongs to the universal ribosomal protein uS3 family. As to quaternary structure, part of the 30S ribosomal subunit. Forms a tight complex with proteins S10 and S14.

Its function is as follows. Binds the lower part of the 30S subunit head. Binds mRNA in the 70S ribosome, positioning it for translation. The polypeptide is Small ribosomal subunit protein uS3 (Helicobacter pylori (strain P12)).